We begin with the raw amino-acid sequence, 594 residues long: Gamma-terpinene synthase, chloroplastic (594 aa).

The transit peptide at 1-44 (MATLSMQVSILSKEVKNVNNIGMRASKPMVARRVSTTRLRPICS) directs the protein to the chloroplast. Mn(2+)-binding residues include D347 and D351. Positions 347–351 (DDVYD) match the DDXXD motif motif. 2 homodimerization regions span residues 353-359 (YGTLDEL) and 425-462 (EAKW…FTLP). Mn(2+)-binding residues include D491 and E499.

Belongs to the terpene synthase family. As to quaternary structure, homodimer. The cofactor is Mn(2+). It depends on Mg(2+) as a cofactor. Expressed in peltate glandular trichomes.

It is found in the plastid. It localises to the chloroplast. The catalysed reaction is (2E)-geranyl diphosphate = gamma-terpinene + diphosphate. It catalyses the reaction (2E)-geranyl diphosphate = alpha-terpinene + diphosphate. The protein operates within secondary metabolite biosynthesis; terpenoid biosynthesis. Functionally, involved in the biosynthesis of phenolic monoterpenes natural products thymol and carvacrol which have a broad range of biological activities acting as antimicrobial compounds, insecticides, antioxidants and pharmaceutical agents. Monoterpene synthase which catalyzes the conversion of geranyl diphosphate (GPP) to gamma-terpinene and the minor products alpha-thujene, alpha-terpinene, myrcene, sabinene, (+)-R-limonene, alpha-pinene and alpha-phellandrene. The polypeptide is Gamma-terpinene synthase, chloroplastic (Origanum vulgare (Wild marjoram)).